The following is a 191-amino-acid chain: Chromobox protein homolog 5 (191 aa).

Residues 1-21 (MGKKTKRTADSSSSEDEEEYV) are disordered. Ser11, Ser12, Ser13, and Ser14 each carry phosphoserine. One can recognise a Chromo 1 domain in the interval 20 to 78 (YVVEKVLDRRMVKGQVEYLLKWKGFSEEHNTWEPEKNLDCPELISEFMKKYKKMKEGEN). Residue Lys32 forms a Glycyl lysine isopeptide (Lys-Gly) (interchain with G-Cter in SUMO2) linkage. At Lys40 the chain carries N6-acetyllysine. Positions 70–117 (YKKMKEGENNKPREKSEGNKRKSSFSNSADDIKSKKKREQSNDIARGF) are disordered. The span at 73-89 (MKEGENNKPREKSEGNK) shows a compositional bias: basic and acidic residues. Residue Lys91 forms a Glycyl lysine isopeptide (Lys-Gly) (interchain with G-Cter in SUMO2) linkage. Phosphoserine is present on residues Ser92, Ser93, Ser95, and Ser97. Glycyl lysine isopeptide (Lys-Gly) (interchain with G-Cter in SUMO2) cross-links involve residues Lys102, Lys106, Lys154, and Lys184. The region spanning 121-179 (LEPEKIIGATDSCGDLMFLMKWKDTDEADLVLAKEANVKCPQIVIAFYEERLTWHAYPE) is the Chromo 2; shadow subtype domain.

As to quaternary structure, homodimer. Interacts with histone H3 methylated at 'Lys-9'. Interacts (via Chromo 2; shadow subtype domain) with the MIS12 complex subunit NSL1; the interaction is direct, involves dimeric CBX5, and occurs during interphase. Interacts with POGZ; POGZ and PXVXL motif-containing proteins such as INCENP and TRIM28 compete for interaction with CBX5. Interacts with LRIF1 (via PxVxL motif). Interacts with INCENP. Interacts with TRIM24. Interacts (via the chromoshadow domain) with ATRX; the interaction is direct. Interacts (via the chromoshadow domain) with CHAF1A; the interaction is direct. Interacts (via the chromoshadow domain) with LBR; the interaction is direct. Interacts (via the chromoshadow domain) with NIPBL; the interaction is direct. Interacts (via the chromoshadow domain) with SP100; the interaction is direct. Interacts (via the chromoshadow domain) with STAM2; the interaction is direct. Interacts (via the chromoshadow domain) with TRIM28; the interaction is direct. Interacts (via the chromoshadow domain) with CBX3; the interaction is direct. Interacts with PRR14 (via N-terminus). Interacts with RRP1B. Interacts with HNRNPU (via C-terminus); this interaction is, at least in part, RNA-dependent. Interacts with ZNF263; recruited to the SIX3 promoter along with other proteins involved in chromatin modification and transcriptional corepression where it contributes to transcriptional repression. Interacts with AURKB during mitosis. Interacts with CHAMP1. Interacts with BAHD1. Interacts with HP1BP3. Interacts with CHD3. Interacts with CHD4. Interacts with SMYD5. Interacts with KMT5B. Interacts with KMT5C. Phosphorylation of HP1 and LBR may be responsible for some of the alterations in chromatin organization and nuclear structure which occur at various times during the cell cycle. Phosphorylated during interphase and possibly hyper-phosphorylated during mitosis. Post-translationally, ubiquitinated.

It is found in the nucleus. The protein localises to the chromosome. The protein resides in the centromere. Its function is as follows. Component of heterochromatin that recognizes and binds histone H3 tails methylated at 'Lys-9' (H3K9me), leading to epigenetic repression. In contrast, it is excluded from chromatin when 'Tyr-41' of histone H3 is phosphorylated (H3Y41ph). May contribute to the association of heterochromatin with the inner nuclear membrane by interactions with the lamin-B receptor (LBR). Involved in the formation of kinetochore through interaction with the MIS12 complex subunit NSL1. Required for the formation of the inner centromere. Component of heterochromatin that recognizes and binds histone H3 tails methylated at 'Lys-9' (H3K9me), leading to epigenetic repression. In contrast, it is excluded from chromatin when 'Tyr-41' of histone H3 is phosphorylated (H3Y41ph). Can interact with lamin-B receptor (LBR). This interaction can contribute to the association of the heterochromatin with the inner nuclear membrane. Involved in the formation of functional kinetochore through interaction with MIS12 complex proteins. This Mus musculus (Mouse) protein is Chromobox protein homolog 5 (Cbx5).